The chain runs to 822 residues: uncharacterized protein (822 aa).

At 1–13 (MCHNSVRSGNKAG) the chain is on the cytoplasmic side. A helical transmembrane segment spans residues 14 to 34 (FLGIKFGSALLSIATGAIAIA). Over 35 to 44 (LLCKFHDHEA) the chain is Extracellular. A helical membrane pass occupies residues 45 to 65 (VLIVIVCSTLLYGIPSLISFI). Residues 66-76 (TETVFAPSKFH) lie on the Cytoplasmic side of the membrane. A helical transmembrane segment spans residues 77-97 (IGYFYNVLNFALPLITMGCTV). The Extracellular portion of the chain corresponds to 98 to 120 (DYFHNTLRSPISVQSESHRVYIT). Residues 121-141 (TLDSLLIFTLFINGIQLGFFL) traverse the membrane as a helical segment. The Cytoplasmic segment spans residues 142-822 (KDGNANNFGS…PVEELVSPSK (681 aa)). A disordered region spans residues 271–290 (RNTQQATKVPTEKKSNHRSS). Position 690 is a phosphoserine (serine 690). A compositionally biased stretch (polar residues) spans 698–712 (TLQSSHSPTKSTSGN). 2 disordered regions span residues 698–728 (TLQS…STVN) and 751–783 (NGEE…GYPE). Low complexity predominate over residues 761 to 776 (QSIQSSSSGSEQESAG).

The protein resides in the membrane. This is an uncharacterized protein from Saccharomyces cerevisiae (strain ATCC 204508 / S288c) (Baker's yeast).